The sequence spans 378 residues: Transcription initiation factor IIA subunit 1 (378 aa).

Alanine 2 carries the N-acetylalanine modification. Low complexity-rich tracts occupy residues 69-79 (QVQQQHQPQQQ), 89-106 (QQAQ…TQQV), and 247-281 (PAQA…TGDT). 2 disordered regions span residues 69–108 (QVQQ…QVLI) and 247–331 (PAQA…QELF). Residues serine 282, serine 283, serine 318, and serine 323 each carry the phosphoserine; by TAF1 modification. The span at 282–331 (SSEEDEDEEEDYDDDEEEDKEKDGAEDGQVEEEPLNSEDDVSDEEGQELF) shows a compositional bias: acidic residues. DNA is bound by residues histidine 345 and arginine 346.

This sequence belongs to the TFIIA subunit 1 family. TFIIA is a heterodimer of the large unprocessed subunit 1 and a small subunit gamma. It was originally believed to be a heterotrimer of an alpha (p35), a beta (p19) and a gamma subunit (p12). TFIIA forms a complex with TBP. Part of TBP-based Pol II pre-initiation complex (PIC), in which Pol II core assembles with general transcription factors and other specific initiation factors including GTF2E1, GTF2E2, GTF2F1, GTF2F2, TCEA1, ERCC2, ERCC3, GTF2H2, GTF2H3, GTF2H4, GTF2H5, GTF2A1, GTF2A2, GTF2B and TBP; this large multi-subunit PIC complex mediates DNA unwinding and targets Pol II core to the transcription start site where the first phosphodiester bond forms. Post-translationally, the alpha and beta subunits are postranslationally produced from the precursor form by TASP1. The cleavage promotes proteasomal degradation. As to expression, expressed in pachytene spermatocytes and spermatids.

The protein resides in the nucleus. Functionally, TFIIA is a component of the transcription machinery of RNA polymerase II and plays an important role in transcriptional activation. TFIIA in a complex with TBP mediates transcriptional activity. This Mus musculus (Mouse) protein is Transcription initiation factor IIA subunit 1 (Gtf2a1).